Consider the following 266-residue polypeptide: Undecaprenyl-diphosphatase (266 aa).

A run of 8 helical transmembrane segments spans residues 1–21 (MTLF…FLPI), 39–59 (QGLA…MIYF), 87–107 (WYVI…KGWI), 113–133 (TALV…YADA), 143–163 (GLTL…LIPG), 187–207 (FSFL…TLDL), 218–238 (ALLY…YLFL), and 244–264 (IGML…LWFV).

This sequence belongs to the UppP family.

It localises to the cell inner membrane. The enzyme catalyses di-trans,octa-cis-undecaprenyl diphosphate + H2O = di-trans,octa-cis-undecaprenyl phosphate + phosphate + H(+). In terms of biological role, catalyzes the dephosphorylation of undecaprenyl diphosphate (UPP). Confers resistance to bacitracin. The protein is Undecaprenyl-diphosphatase of Alteromonas mediterranea (strain DSM 17117 / CIP 110805 / LMG 28347 / Deep ecotype).